Reading from the N-terminus, the 1419-residue chain is Agglutinin-like protein 5 (1419 aa).

A signal peptide spans Met-1–Ala-17. Cystine bridges form between Cys-73-Cys-150, Cys-96-Cys-112, Cys-205-Cys-298, and Cys-227-Cys-256. ALS repeat units lie at residues Thr-365–Pro-396, Thr-401–Pro-432, Thr-438–Pro-469, Val-474–Pro-505, Val-510–Pro-541, Val-546–Pro-577, Val-582–Pro-613, and Val-618–Pro-649. Disordered regions lie at residues Glu-652–Ser-752 and Ala-864–Gln-885. A glycan (N-linked (GlcNAc...) asparagine) is linked at Asn-665. An N-linked (GlcNAc...) asparagine glycan is attached at Asn-919. 5 disordered regions span residues Ser-926–Thr-966, Thr-981–Ser-1035, Thr-1051–Ser-1093, Glu-1134–Val-1177, and Ala-1211–Ser-1252. Low complexity-rich tracts occupy residues Ser-928–Ser-942, Ser-951–Thr-966, and Thr-993–Ala-1011. The span at Glu-1012–Asp-1022 shows a compositional bias: polar residues. 2 stretches are compositionally biased toward low complexity: residues Ser-1023–Ser-1035 and Thr-1051–Asn-1078. Composition is skewed to polar residues over residues Ala-1079 to Ser-1093 and Pro-1138 to Ser-1160. Positions Thr-1212–Thr-1230 are enriched in low complexity. Asn-1301 and Asn-1326 each carry an N-linked (GlcNAc...) asparagine glycan. A lipid anchor (GPI-anchor amidated serine) is attached at Ser-1398. Positions Ser-1399–Leu-1419 are cleaved as a propeptide — removed in mature form.

Belongs to the ALS family. Forms homodimers through the tandem repeats. Aggregates in amyloid-like structures, with self-propagating secondary-structure changes, amyloid-characteristic dye binding, and induced birefringence. Post-translationally, N-glycosylated and O-glycosylated. In terms of processing, the GPI-anchor is attached to the protein in the endoplasmic reticulum and serves to target the protein to the cell surface. There, the glucosamine-inositol phospholipid moiety is cleaved off and the GPI-modified mannoprotein is covalently attached via its lipidless GPI glycan remnant to the 1,6-beta-glucan of the outer cell wall layer.

The protein resides in the cell membrane. The protein localises to the secreted. Its subcellular location is the cell wall. Its function is as follows. Cell surface adhesion protein which mediates both yeast-to-host tissue adherence and yeast aggregation. Plays an important role in the pathogenesis of C.albicans infections. Forms amyloid structures, essential for cell-cell association and cell-substrate adhesion to polystyrene. This chain is Agglutinin-like protein 5 (ALS5), found in Candida albicans (Yeast).